We begin with the raw amino-acid sequence, 155 residues long: Polyadenylate-binding protein-interacting protein 5 (155 aa).

The PAM2-like signature appears at A7–P17. Residues D66–I109 enclose the CUE domain. Positions S114–A155 are disordered. A compositionally biased stretch (polar residues) spans S130 to I148.

Specifically expressed in immature siliques.

In terms of biological role, promotes polyploidy in dark-grown seedlings. Regulates the endocycle leading to hypocotyl elongation. The protein is Polyadenylate-binding protein-interacting protein 5 (CID5) of Arabidopsis thaliana (Mouse-ear cress).